The chain runs to 591 residues: Metastasis-associated protein MTA3 (591 aa).

Residues 1–147 (MAANMYRVGD…PSVKTLLADK (147 aa)) form the BAH domain. Positions 148-258 (GEIRVGPKYQ…SAISVLVPLG (111 aa)) constitute an ELM2 domain. Residues 265–317 (DEMEEWSASEACLFEEALEKYGKDFNDIRQDFLPWKSLTSIIEYYYMWKTTDR) enclose the SANT domain. The GATA-type; atypical zinc finger occupies 377–404 (CESCYATQSHQWYSWGPPNMQCRLCATC). Residues 417–456 (PTQSDEEKSPSPTAEDPRARSHMSRQALQGMPVRNTGSPK) are disordered. The segment covering 421 to 435 (DEEKSPSPTAEDPRA) has biased composition (basic and acidic residues). S425 and S427 each carry phosphoserine. Position 452 is a phosphothreonine (T452). Residue S516 is modified to Phosphoserine.

The protein belongs to the metastasis-associated protein family. As to quaternary structure, component of the nucleosome remodeling and deacetylase (NuRD) repressor complex, composed of core proteins MTA1, MTA2, MTA3, RBBP4, RBBP7, HDAC1, HDAC2, MBD2, MBD3, and peripherally associated proteins CDK2AP1, CDK2AP2, GATAD2A, GATAD2B, CHD3, CHD4 and CHD5. The exact stoichiometry of the NuRD complex is unknown, and some subunits such as MBD2 and MBD3, GATAD2A and GATAD2B, and CHD3, CHD4 and CHD5 define mutually exclusive NuRD complexes. Interacts with BCL6. Interacts with NACC2. Interacts with PWWP2B. In terms of tissue distribution, expressed in heart, brain, spleen, lung, liver and kidney.

It localises to the nucleus. The protein resides in the cytoplasm. Its function is as follows. Acts as a component of the histone deacetylase NuRD complex which participates in the remodeling of chromatin. Plays a role in maintenance of the normal epithelial architecture through the repression of SNAI1 transcription in a histone deacetylase-dependent manner, and thus the regulation of E-cadherin levels. Contributes to transcriptional repression by BCL6. This Mus musculus (Mouse) protein is Metastasis-associated protein MTA3 (Mta3).